The primary structure comprises 328 residues: Nickel import system permease protein NikB (328 aa).

6 helical membrane-spanning segments follow: residues 11–31 (LMQM…LMKL), 104–124 (LLIS…LGII), 139–159 (VIST…LLFI), 170–190 (ILSQ…AYII), 229–249 (ILPI…GTVV), and 279–299 (VLFI…LTLL). Positions 100-297 (APITLLISFS…IINTIADLLT (198 aa)) constitute an ABC transmembrane type-1 domain.

It belongs to the binding-protein-dependent transport system permease family. OppBC subfamily. The complex is composed of two ATP-binding proteins (NikD and NikE), two transmembrane proteins (NikB and NikC) and a solute-binding protein (NikA).

It is found in the cell membrane. Part of the ABC transporter complex NikABCDE (Opp2) involved in nickel import. Probably responsible for the translocation of the substrate across the membrane. The protein is Nickel import system permease protein NikB of Staphylococcus aureus (strain bovine RF122 / ET3-1).